The following is a 357-amino-acid chain: Ribosomal RNA large subunit methyltransferase M (357 aa).

S-adenosyl-L-methionine-binding positions include S183, 216–219, D235, D255, and D271; that span reads APGG. K300 acts as the Proton acceptor in catalysis.

It belongs to the class I-like SAM-binding methyltransferase superfamily. RNA methyltransferase RlmE family. RlmM subfamily. Monomer.

The protein localises to the cytoplasm. The catalysed reaction is cytidine(2498) in 23S rRNA + S-adenosyl-L-methionine = 2'-O-methylcytidine(2498) in 23S rRNA + S-adenosyl-L-homocysteine + H(+). Functionally, catalyzes the 2'-O-methylation at nucleotide C2498 in 23S rRNA. This Pseudomonas syringae pv. syringae (strain B728a) protein is Ribosomal RNA large subunit methyltransferase M.